The primary structure comprises 85 residues: Small ribosomal subunit protein uS17 (85 aa).

This sequence belongs to the universal ribosomal protein uS17 family. As to quaternary structure, part of the 30S ribosomal subunit.

In terms of biological role, one of the primary rRNA binding proteins, it binds specifically to the 5'-end of 16S ribosomal RNA. This is Small ribosomal subunit protein uS17 from Anaeromyxobacter sp. (strain Fw109-5).